Here is a 307-residue protein sequence, read N- to C-terminus: Mycothiol acetyltransferase (307 aa).

2 consecutive N-acetyltransferase domains span residues 12–157 and 160–307; these read TRTD…PPLP and VTLR…YQLG. E43 serves as a coordination point for 1D-myo-inositol 2-(L-cysteinylamino)-2-deoxy-alpha-D-glucopyranoside. 87–89 provides a ligand contact to acetyl-CoA; it reads LAV. Residues E187, K227, and E239 each contribute to the 1D-myo-inositol 2-(L-cysteinylamino)-2-deoxy-alpha-D-glucopyranoside site. Acetyl-CoA contacts are provided by residues 243 to 245 and 250 to 256; these read LGV and HGGGLGK. Y278 is a 1D-myo-inositol 2-(L-cysteinylamino)-2-deoxy-alpha-D-glucopyranoside binding site.

This sequence belongs to the acetyltransferase family. MshD subfamily. In terms of assembly, monomer.

The catalysed reaction is 1D-myo-inositol 2-(L-cysteinylamino)-2-deoxy-alpha-D-glucopyranoside + acetyl-CoA = mycothiol + CoA + H(+). Functionally, catalyzes the transfer of acetyl from acetyl-CoA to desacetylmycothiol (Cys-GlcN-Ins) to form mycothiol. The polypeptide is Mycothiol acetyltransferase (Salinispora tropica (strain ATCC BAA-916 / DSM 44818 / JCM 13857 / NBRC 105044 / CNB-440)).